Here is a 192-residue protein sequence, read N- to C-terminus: UPF0312 protein Avin_03250 (192 aa).

A signal peptide spans 1-23 (MLKKTLAALALGSALLGAGQAMA).

Belongs to the UPF0312 family. Type 1 subfamily.

It localises to the periplasm. The polypeptide is UPF0312 protein Avin_03250 (Azotobacter vinelandii (strain DJ / ATCC BAA-1303)).